The sequence spans 343 residues: tRNA N6-adenosine threonylcarbamoyltransferase (343 aa).

2 residues coordinate Fe cation: histidine 112 and histidine 116. Residues 135 to 139, aspartate 168, glycine 181, and asparagine 273 contribute to the substrate site; that span reads LVSGG. Fe cation is bound at residue aspartate 301.

Belongs to the KAE1 / TsaD family. Requires Fe(2+) as cofactor.

The protein localises to the cytoplasm. The enzyme catalyses L-threonylcarbamoyladenylate + adenosine(37) in tRNA = N(6)-L-threonylcarbamoyladenosine(37) in tRNA + AMP + H(+). Functionally, required for the formation of a threonylcarbamoyl group on adenosine at position 37 (t(6)A37) in tRNAs that read codons beginning with adenine. Is involved in the transfer of the threonylcarbamoyl moiety of threonylcarbamoyl-AMP (TC-AMP) to the N6 group of A37, together with TsaE and TsaB. TsaD likely plays a direct catalytic role in this reaction. In Azoarcus sp. (strain BH72), this protein is tRNA N6-adenosine threonylcarbamoyltransferase.